Reading from the N-terminus, the 296-residue chain is Putative ankyrin repeat protein FPV216 (296 aa).

ANK repeat units follow at residues 73–102 (SYVNPLIYAIECDNHDAILSLIRYGADVNT) and 107–136 (LVITPLYISVLHGCPKCVEILLYYGANINI).

This chain is Putative ankyrin repeat protein FPV216, found in Fowlpox virus (strain NVSL) (FPV).